We begin with the raw amino-acid sequence, 159 residues long: RNA pyrophosphohydrolase (159 aa).

In terms of domain architecture, Nudix hydrolase spans 6–149 (GFRPNVGIIL…KREVYRRALK (144 aa)). Residues 38-59 (GGINPDETPEDALYRELNEEVG) carry the Nudix box motif.

It belongs to the Nudix hydrolase family. RppH subfamily. The cofactor is a divalent metal cation.

Accelerates the degradation of transcripts by removing pyrophosphate from the 5'-end of triphosphorylated RNA, leading to a more labile monophosphorylated state that can stimulate subsequent ribonuclease cleavage. The chain is RNA pyrophosphohydrolase from Pseudomonas putida (strain ATCC 700007 / DSM 6899 / JCM 31910 / BCRC 17059 / LMG 24140 / F1).